Reading from the N-terminus, the 216-residue chain is Thymidine kinase (216 aa).

ATP-binding positions include 9-16 (GTMDCGKS) and 86-89 (DEAQ). The Proton acceptor role is filled by glutamate 87.

It belongs to the thymidine kinase family. As to quaternary structure, homotetramer.

It is found in the cytoplasm. It catalyses the reaction thymidine + ATP = dTMP + ADP + H(+). The chain is Thymidine kinase from Streptomyces coelicolor (strain ATCC BAA-471 / A3(2) / M145).